A 910-amino-acid chain; its full sequence is 2-oxoglutarate dehydrogenase E1 component (910 aa).

This sequence belongs to the alpha-ketoglutarate dehydrogenase family. Homodimer. Part of the 2-oxoglutarate dehydrogenase (OGDH) complex composed of E1 (2-oxoglutarate dehydrogenase), E2 (dihydrolipoamide succinyltransferase) and E3 (dihydrolipoamide dehydrogenase); the complex contains multiple copies of the three enzymatic components (E1, E2 and E3). The cofactor is thiamine diphosphate.

It catalyses the reaction N(6)-[(R)-lipoyl]-L-lysyl-[protein] + 2-oxoglutarate + H(+) = N(6)-[(R)-S(8)-succinyldihydrolipoyl]-L-lysyl-[protein] + CO2. Its function is as follows. E1 component of the 2-oxoglutarate dehydrogenase (OGDH) complex which catalyzes the decarboxylation of 2-oxoglutarate, the first step in the conversion of 2-oxoglutarate to succinyl-CoA and CO(2). The sequence is that of 2-oxoglutarate dehydrogenase E1 component from Staphylococcus aureus (strain N315).